The primary structure comprises 96 residues: Co-chaperonin GroES (96 aa).

The protein belongs to the GroES chaperonin family. As to quaternary structure, heptamer of 7 subunits arranged in a ring. Interacts with the chaperonin GroEL.

It localises to the cytoplasm. Together with the chaperonin GroEL, plays an essential role in assisting protein folding. The GroEL-GroES system forms a nano-cage that allows encapsulation of the non-native substrate proteins and provides a physical environment optimized to promote and accelerate protein folding. GroES binds to the apical surface of the GroEL ring, thereby capping the opening of the GroEL channel. This is Co-chaperonin GroES from Nitrosomonas eutropha (strain DSM 101675 / C91 / Nm57).